The following is a 359-amino-acid chain: 3-dehydroquinate synthase (359 aa).

Residues 69-74 (DGEAHK), 103-107 (GVIGD), 127-128 (TT), Lys-140, Lys-149, and 167-170 (TLDT) each bind NAD(+). Residues Glu-182, His-245, and His-262 each coordinate Zn(2+).

It belongs to the sugar phosphate cyclases superfamily. Dehydroquinate synthase family. It depends on Co(2+) as a cofactor. Requires Zn(2+) as cofactor. NAD(+) serves as cofactor.

It is found in the cytoplasm. It catalyses the reaction 7-phospho-2-dehydro-3-deoxy-D-arabino-heptonate = 3-dehydroquinate + phosphate. The protein operates within metabolic intermediate biosynthesis; chorismate biosynthesis; chorismate from D-erythrose 4-phosphate and phosphoenolpyruvate: step 2/7. Its function is as follows. Catalyzes the conversion of 3-deoxy-D-arabino-heptulosonate 7-phosphate (DAHP) to dehydroquinate (DHQ). The sequence is that of 3-dehydroquinate synthase from Methylococcus capsulatus (strain ATCC 33009 / NCIMB 11132 / Bath).